We begin with the raw amino-acid sequence, 214 residues long: Calcineurin B homologous protein 3 (214 aa).

Positions M1–F20 are disordered. Residue G2 is the site of N-myristoyl glycine attachment. Residues A7–G16 show a composition bias toward basic and acidic residues. The EF-hand domain occupies S110–G145. Ca(2+) contacts are provided by D123, D125, D127, R129, and E134.

Belongs to the calcineurin regulatory subunit family. CHP subfamily. Monomer. Homodimer; disulfide-linked. Interacts with SLC9A1/NHE1; the interaction enables an optimal Na(+)/H(+) exchange activity. Expressed in mature megakaryocytes and polymorphonuclear granulocytes (at protein level). Abundantly expressed in heart. Also expressed at a lower level in adult testis and salivary gland, and in the placenta.

The protein localises to the nucleus. The protein resides in the cytoplasm. It localises to the membrane. It is found in the cell membrane. Its subcellular location is the cell projection. The protein localises to the lamellipodium. The protein resides in the ruffle membrane. Functionally, functions as an integral cofactor in cell pH regulation by controlling plasma membrane-type Na(+)/H(+) exchange activity. Promotes the maturation, transport, cell surface stability and exchange activity of SLC9A1/NHE1 at the plasma membrane. Promotes the induction of hematopoietic stem cell differentiation toward megakaryocytic lineage. Essential for the coupling of ERK cascade activation with the expression of ETS family genes in megakaryocytic differentiation. Also involved in granulocytic differentiation in a ERK-dependent manner. Inhibits the phosphatase activity of calcineurin. In Homo sapiens (Human), this protein is Calcineurin B homologous protein 3 (TESC).